We begin with the raw amino-acid sequence, 121 residues long: Small ribosomal subunit protein uS12c (121 aa).

The protein belongs to the universal ribosomal protein uS12 family. As to quaternary structure, part of the 30S ribosomal subunit.

Its subcellular location is the plastid. It is found in the apicoplast. With S4 and S5 plays an important role in translational accuracy. Located at the interface of the 30S and 50S subunits. The chain is Small ribosomal subunit protein uS12c (rps12) from Toxoplasma gondii.